A 435-amino-acid chain; its full sequence is MLTSLSLTALALLPSANALVRKDGVGRLPALGWNSWNAFGCDVDSTKIMTAANEMVHLGLKDLGYEYVNIDDCWSVKNTRNSTTQRIIPDTQKFPDGISGVADQVHQLGLKIGIYSSAGETTCAGYPASLGYEKVDAEAFAEWGIDYLKYDNCGVPSNWTDQYSSCVPDGSNEPANGTCPGLSNPAPAGYDWTKSNTFTRYTMMRDALLGQTRTILYSLCDWGQADVNTWGNETGNSWRMSGDISANWARIAQIANENTFRMNYVGFWGHPDPDMLEVGNGDLTAAENRAHFALWAIMKSPLIIGTALDGISDANLAVLKNKYLIEFNQDPIIGRSAHPYKWGYNPDWTFDPAHPAEYWSGPSSTLKGTLVLMLNSENSTSTRTAVWKEIPELKGHNAYRVTDAWSGKDLGCVKKQYSASLASHDVAVLVVKEAC.

Positions 1 to 18 are cleaved as a signal peptide; that stretch reads MLTSLSLTALALLPSANA. A disulfide bridge links Cys-41 with Cys-73. An N-linked (GlcNAc...) asparagine glycan is attached at Asn-81. Residues Cys-123 and Cys-153 are joined by a disulfide bond. Asp-151 acts as the Nucleophile in catalysis. N-linked (GlcNAc...) asparagine glycans are attached at residues Asn-158 and Asn-176. 221–225 serves as a coordination point for substrate; the sequence is DWGQA. N-linked (GlcNAc...) asparagine glycosylation occurs at Asn-232. Residue Asp-243 is the Proton donor of the active site. Residue Asn-378 is glycosylated (N-linked (GlcNAc...) asparagine).

This sequence belongs to the glycosyl hydrolase 27 family.

It localises to the secreted. The enzyme catalyses Hydrolysis of terminal, non-reducing alpha-D-galactose residues in alpha-D-galactosides, including galactose oligosaccharides, galactomannans and galactolipids.. Hydrolyzes a variety of simple alpha-D-galactoside as well as more complex molecules such as oligosaccharides and polysaccharides. The sequence is that of Probable alpha-galactosidase B (agl1) from Penicillium simplicissimum.